Reading from the N-terminus, the 108-residue chain is Phosphoribosyl-ATP pyrophosphatase (108 aa).

The protein belongs to the PRA-PH family.

It localises to the cytoplasm. The catalysed reaction is 1-(5-phospho-beta-D-ribosyl)-ATP + H2O = 1-(5-phospho-beta-D-ribosyl)-5'-AMP + diphosphate + H(+). It functions in the pathway amino-acid biosynthesis; L-histidine biosynthesis; L-histidine from 5-phospho-alpha-D-ribose 1-diphosphate: step 2/9. This Pelobacter propionicus (strain DSM 2379 / NBRC 103807 / OttBd1) protein is Phosphoribosyl-ATP pyrophosphatase.